Reading from the N-terminus, the 220-residue chain is Putative O-methyltransferase Mjls_4009 (220 aa).

S-adenosyl-L-methionine contacts are provided by residues Val47, Glu69, 71–72 (GT), Ser77, Asp95, and Val96. Asp143 contributes to the substrate binding site. Asp145 is an S-adenosyl-L-methionine binding site.

It belongs to the class I-like SAM-binding methyltransferase superfamily. Cation-dependent O-methyltransferase family.

The chain is Putative O-methyltransferase Mjls_4009 from Mycobacterium sp. (strain JLS).